Here is a 92-residue protein sequence, read N- to C-terminus: Large ribosomal subunit protein bL27 (92 aa).

The propeptide occupies 1-8 (MLMNLQFF). The disordered stretch occupies residues 11–30 (HKGGGSTANGRDSAGRRLGA).

Belongs to the bacterial ribosomal protein bL27 family. In terms of processing, the N-terminus is cleaved by ribosomal processing cysteine protease Prp.

The protein is Large ribosomal subunit protein bL27 of Lactiplantibacillus plantarum (strain ATCC BAA-793 / NCIMB 8826 / WCFS1) (Lactobacillus plantarum).